The primary structure comprises 599 residues: uncharacterized protein (599 aa).

G49–T56 provides a ligand contact to ATP. Positions A416 to V599 constitute a Macro domain.

This sequence in the N-terminal section; belongs to the AAA ATPase family. RarA/MGS1/WRNIP1 subfamily.

This is an uncharacterized protein from Thermotoga maritima (strain ATCC 43589 / DSM 3109 / JCM 10099 / NBRC 100826 / MSB8).